Reading from the N-terminus, the 517-residue chain is Ladinin-1 (517 aa).

The segment at 1–401 (MAVSRKDWSA…SASMKLPDNT (401 aa)) is disordered. Residue S38 is modified to Phosphoserine. Positions 48–58 (LSQNGDRQASA) are enriched in polar residues. Phosphoserine is present on residues S64, S78, S121, and S123. Polar residues predominate over residues 120 to 131 (NSLSPVQATQKP). 2 stretches are compositionally biased toward basic and acidic residues: residues 134-151 (SKKE…REQR) and 161-174 (LVGR…KGVP). 8 SEK repeats span residues 203–205 (SEK), 209–211 (SEK), 215–217 (SEK), 221–223 (SEK), 227–229 (SEK), 239–241 (SEK), 257–259 (SEK), and 269–271 (SEK). The segment at 203–271 (SEKVLASEKT…IFEKALASEK (69 aa)) is 8 X SEK repeats. Over residues 219 to 233 (AVSEKRNSSEKKSVL) the composition is skewed to basic and acidic residues. Residues S347, S356, and S394 each carry the phosphoserine modification. The segment covering 355 to 373 (SSPTQRTYSSSLKRSSPRT) has biased composition (polar residues). Position 424 is an omega-N-methylarginine (R424). The interval 481-517 (RTQESGDQDPQEAQKASSATERTQWGQKSDSSLDAEV) is disordered. Phosphoserine is present on S485. Polar residues predominate over residues 494–517 (QKASSATERTQWGQKSDSSLDAEV).

It localises to the secreted. The protein localises to the extracellular space. The protein resides in the extracellular matrix. It is found in the basement membrane. In terms of biological role, anchoring filament protein which is a component of the basement membrane zone. This chain is Ladinin-1 (LAD1), found in Homo sapiens (Human).